A 256-amino-acid polypeptide reads, in one-letter code: Thiazole synthase (256 aa).

Residue lysine 97 is the Schiff-base intermediate with DXP of the active site. Residues glycine 158, 184–185 (AG), and 206–207 (NT) contribute to the 1-deoxy-D-xylulose 5-phosphate site.

This sequence belongs to the ThiG family. As to quaternary structure, homotetramer. Forms heterodimers with either ThiH or ThiS.

It localises to the cytoplasm. It catalyses the reaction [ThiS sulfur-carrier protein]-C-terminal-Gly-aminoethanethioate + 2-iminoacetate + 1-deoxy-D-xylulose 5-phosphate = [ThiS sulfur-carrier protein]-C-terminal Gly-Gly + 2-[(2R,5Z)-2-carboxy-4-methylthiazol-5(2H)-ylidene]ethyl phosphate + 2 H2O + H(+). The protein operates within cofactor biosynthesis; thiamine diphosphate biosynthesis. In terms of biological role, catalyzes the rearrangement of 1-deoxy-D-xylulose 5-phosphate (DXP) to produce the thiazole phosphate moiety of thiamine. Sulfur is provided by the thiocarboxylate moiety of the carrier protein ThiS. In vitro, sulfur can be provided by H(2)S. The polypeptide is Thiazole synthase (Pelotomaculum thermopropionicum (strain DSM 13744 / JCM 10971 / SI)).